Reading from the N-terminus, the 382-residue chain is Anhydro-N-acetylmuramic acid kinase (382 aa).

ATP is bound at residue 22-29 (GTSMDGVD).

Belongs to the anhydro-N-acetylmuramic acid kinase family.

It catalyses the reaction 1,6-anhydro-N-acetyl-beta-muramate + ATP + H2O = N-acetyl-D-muramate 6-phosphate + ADP + H(+). The protein operates within amino-sugar metabolism; 1,6-anhydro-N-acetylmuramate degradation. It functions in the pathway cell wall biogenesis; peptidoglycan recycling. Catalyzes the specific phosphorylation of 1,6-anhydro-N-acetylmuramic acid (anhMurNAc) with the simultaneous cleavage of the 1,6-anhydro ring, generating MurNAc-6-P. Is required for the utilization of anhMurNAc either imported from the medium or derived from its own cell wall murein, and thus plays a role in cell wall recycling. The sequence is that of Anhydro-N-acetylmuramic acid kinase from Burkholderia cenocepacia (strain ATCC BAA-245 / DSM 16553 / LMG 16656 / NCTC 13227 / J2315 / CF5610) (Burkholderia cepacia (strain J2315)).